Consider the following 483-residue polypeptide: Trigger factor (483 aa).

The 82-residue stretch at 162–243 (GDYVSLDLSA…VRGVKEKELP (82 aa)) folds into the PPIase FKBP-type domain. Residues 459-483 (AVAPGDGDATVEPVEPVEAETDGNG) form a disordered region. Over residues 473-483 (EPVEAETDGNG) the composition is skewed to acidic residues.

This sequence belongs to the FKBP-type PPIase family. Tig subfamily.

Its subcellular location is the cytoplasm. The enzyme catalyses [protein]-peptidylproline (omega=180) = [protein]-peptidylproline (omega=0). Involved in protein export. Acts as a chaperone by maintaining the newly synthesized protein in an open conformation. Functions as a peptidyl-prolyl cis-trans isomerase. This is Trigger factor from Frankia casuarinae (strain DSM 45818 / CECT 9043 / HFP020203 / CcI3).